The primary structure comprises 428 residues: Probable dual-specificity RNA methyltransferase RlmN 2 (428 aa).

Catalysis depends on E142, which acts as the Proton acceptor. The region spanning 148-414 (FAGRATACVS…STVRQRRGID (267 aa)) is the Radical SAM core domain. A disulfide bond links C155 and C419. Positions 162, 166, and 169 each coordinate [4Fe-4S] cluster. A compositionally biased stretch (basic and acidic residues) spans 207–228 (MRDPSPGREAGEKSRDEADRHR). Positions 207–232 (MRDPSPGREAGEKSRDEADRHRAPPT) are disordered. S-adenosyl-L-methionine is bound by residues 244 to 245 (GE), S276, 299 to 301 (SLH), and N375. Residue C419 is the S-methylcysteine intermediate of the active site.

Belongs to the radical SAM superfamily. RlmN family. The cofactor is [4Fe-4S] cluster.

It localises to the cytoplasm. It carries out the reaction adenosine(2503) in 23S rRNA + 2 reduced [2Fe-2S]-[ferredoxin] + 2 S-adenosyl-L-methionine = 2-methyladenosine(2503) in 23S rRNA + 5'-deoxyadenosine + L-methionine + 2 oxidized [2Fe-2S]-[ferredoxin] + S-adenosyl-L-homocysteine. The enzyme catalyses adenosine(37) in tRNA + 2 reduced [2Fe-2S]-[ferredoxin] + 2 S-adenosyl-L-methionine = 2-methyladenosine(37) in tRNA + 5'-deoxyadenosine + L-methionine + 2 oxidized [2Fe-2S]-[ferredoxin] + S-adenosyl-L-homocysteine. In terms of biological role, specifically methylates position 2 of adenine 2503 in 23S rRNA and position 2 of adenine 37 in tRNAs. This is Probable dual-specificity RNA methyltransferase RlmN 2 from Opitutus terrae (strain DSM 11246 / JCM 15787 / PB90-1).